Consider the following 428-residue polypeptide: Glutamate-1-semialdehyde 2,1-aminomutase (428 aa).

Lysine 265 is modified (N6-(pyridoxal phosphate)lysine).

This sequence belongs to the class-III pyridoxal-phosphate-dependent aminotransferase family. HemL subfamily. Homodimer. The cofactor is pyridoxal 5'-phosphate.

The protein resides in the cytoplasm. The catalysed reaction is (S)-4-amino-5-oxopentanoate = 5-aminolevulinate. It participates in porphyrin-containing compound metabolism; protoporphyrin-IX biosynthesis; 5-aminolevulinate from L-glutamyl-tRNA(Glu): step 2/2. The protein is Glutamate-1-semialdehyde 2,1-aminomutase of Shewanella loihica (strain ATCC BAA-1088 / PV-4).